The primary structure comprises 85 residues: Cell division topological specificity factor (85 aa).

This sequence belongs to the MinE family.

Functionally, prevents the cell division inhibition by proteins MinC and MinD at internal division sites while permitting inhibition at polar sites. This ensures cell division at the proper site by restricting the formation of a division septum at the midpoint of the long axis of the cell. The chain is Cell division topological specificity factor from Xylella fastidiosa (strain M23).